Reading from the N-terminus, the 356-residue chain is Probable cytosolic iron-sulfur protein assembly protein 1 (356 aa).

WD repeat units follow at residues Gly-34–Glu-73, Gly-89–Cys-128, Glu-134–Cys-173, Ala-179–Glu-218, His-244–Arg-291, and Ala-319–Thr-356.

This sequence belongs to the WD repeat CIA1 family.

Functionally, essential component of the cytosolic iron-sulfur (Fe/S) protein assembly machinery. Required for the maturation of extramitochondrial Fe/S proteins. This is Probable cytosolic iron-sulfur protein assembly protein 1 from Malassezia globosa (strain ATCC MYA-4612 / CBS 7966) (Dandruff-associated fungus).